Here is a 284-residue protein sequence, read N- to C-terminus: 2-dehydro-3-deoxyphosphooctonate aldolase (284 aa).

This sequence belongs to the KdsA family.

It is found in the cytoplasm. It carries out the reaction D-arabinose 5-phosphate + phosphoenolpyruvate + H2O = 3-deoxy-alpha-D-manno-2-octulosonate-8-phosphate + phosphate. It participates in carbohydrate biosynthesis; 3-deoxy-D-manno-octulosonate biosynthesis; 3-deoxy-D-manno-octulosonate from D-ribulose 5-phosphate: step 2/3. It functions in the pathway bacterial outer membrane biogenesis; lipopolysaccharide biosynthesis. The protein is 2-dehydro-3-deoxyphosphooctonate aldolase of Methylobacterium radiotolerans (strain ATCC 27329 / DSM 1819 / JCM 2831 / NBRC 15690 / NCIMB 10815 / 0-1).